Reading from the N-terminus, the 216-residue chain is Adenylate kinase (216 aa).

10-15 lines the ATP pocket; that stretch reads GAGKGT. The segment at 30–59 is NMP; sequence STGDMLRAAVKAETPVGLKAKAVMEAGQLV. AMP is bound by residues T31, R36, 57–59, 85–88, and Q92; these read QLV and GYPR. The tract at residues 126 to 164 is LID; sequence GRYTCATCGKGYHDKFEKPAVEGTCDKCGGHEFKRRPDD. R127 contacts ATP. Zn(2+)-binding residues include C130, C133, C150, and C153. AMP-binding residues include R161 and R172. A200 contacts ATP.

It belongs to the adenylate kinase family. In terms of assembly, monomer.

It is found in the cytoplasm. The catalysed reaction is AMP + ATP = 2 ADP. Its pathway is purine metabolism; AMP biosynthesis via salvage pathway; AMP from ADP: step 1/1. Catalyzes the reversible transfer of the terminal phosphate group between ATP and AMP. Plays an important role in cellular energy homeostasis and in adenine nucleotide metabolism. The chain is Adenylate kinase from Novosphingobium aromaticivorans (strain ATCC 700278 / DSM 12444 / CCUG 56034 / CIP 105152 / NBRC 16084 / F199).